Consider the following 1169-residue polypeptide: Chromosome partition protein Smc (1169 aa).

An ATP-binding site is contributed by 32-39 (PNGCGKSN). Coiled-coil stretches lie at residues 170–265 (ISKY…TGEE) and 307–481 (IRHT…ERLN). One can recognise an SMC hinge domain in the interval 525-620 (DRLGEKIEVA…CASDPAEAAE (96 aa)). Coiled coils occupy residues 656 to 914 (ALAR…MKLA) and 985 to 1014 (RYLEEQDRDLTESLATLEQAIEKIDRECRA).

It belongs to the SMC family. As to quaternary structure, homodimer.

Its subcellular location is the cytoplasm. Required for chromosome condensation and partitioning. The polypeptide is Chromosome partition protein Smc (Methylococcus capsulatus (strain ATCC 33009 / NCIMB 11132 / Bath)).